An 89-amino-acid polypeptide reads, in one-letter code: Small ribosomal subunit protein uS15 (89 aa).

The protein belongs to the universal ribosomal protein uS15 family. Part of the 30S ribosomal subunit. Forms a bridge to the 50S subunit in the 70S ribosome, contacting the 23S rRNA.

One of the primary rRNA binding proteins, it binds directly to 16S rRNA where it helps nucleate assembly of the platform of the 30S subunit by binding and bridging several RNA helices of the 16S rRNA. Functionally, forms an intersubunit bridge (bridge B4) with the 23S rRNA of the 50S subunit in the ribosome. This chain is Small ribosomal subunit protein uS15, found in Prochlorococcus marinus (strain MIT 9215).